The following is a 180-amino-acid chain: UPF0227 protein CKO_01948 (180 aa).

The protein belongs to the UPF0227 family.

This is UPF0227 protein CKO_01948 from Citrobacter koseri (strain ATCC BAA-895 / CDC 4225-83 / SGSC4696).